The primary structure comprises 110 residues: Defensin-like protein 296 (110 aa).

Positions 1–28 (MASKITIFFVLALVVVCTMMVCIPTATA) are cleaved as a signal peptide. 6 cysteine pairs are disulfide-bonded: Cys-34–Cys-52, Cys-40–Cys-57, Cys-45–Cys-59, Cys-81–Cys-102, Cys-87–Cys-107, and Cys-95–Cys-109.

The protein belongs to the DEFL family.

The protein resides in the secreted. The polypeptide is Defensin-like protein 296 (Arabidopsis thaliana (Mouse-ear cress)).